We begin with the raw amino-acid sequence, 420 residues long: Transcription factor bHLH89 (420 aa).

Positions 196 to 216 are disordered; sequence EENNNLDDGLNRKGRGSKKRK. Over residues 207 to 216 the composition is skewed to basic residues; it reads RKGRGSKKRK. A bHLH domain is found at 212 to 261; it reads SKKRKIFPTERERRVHFKDRFGDLKNLIPNPTKNDRASIVGEAIDYIKEL.

Homodimer. Flowers.

The protein resides in the nucleus. This chain is Transcription factor bHLH89 (BHLH89), found in Arabidopsis thaliana (Mouse-ear cress).